The sequence spans 486 residues: FAD-dependent oxidoreductase domain-containing protein 1 (486 aa).

The helical transmembrane segment at 66–86 (VVVVGGGVLGLSVAYWLKQLE) threads the bilayer.

As to quaternary structure, associates with components of the mitochondrial respiratory chain complex I. FAD is required as a cofactor.

The protein resides in the mitochondrion inner membrane. Required for the assembly of the mitochondrial membrane respiratory chain NADH dehydrogenase (Complex I). Involved in mid-late stages of complex I assembly. The polypeptide is FAD-dependent oxidoreductase domain-containing protein 1 (FOXRED1) (Macaca fascicularis (Crab-eating macaque)).